Here is a 196-residue protein sequence, read N- to C-terminus: Holliday junction branch migration complex subunit RuvA (196 aa).

Residues 1 to 63 are domain I; the sequence is MYDYIKGILT…EDAHLLYGFA (63 aa). The interval 64-142 is domain II; sequence TENEKSVFLS…MSEEAGPVQQ (79 aa). A flexible linker region spans residues 142–146; the sequence is QVAPS. The interval 147-196 is domain III; it reads SENIALEEAMEAMEALGYRPAELKKIKKFFEGTNDTAENYIKSALKMLMK.

It belongs to the RuvA family. In terms of assembly, homotetramer. Forms an RuvA(8)-RuvB(12)-Holliday junction (HJ) complex. HJ DNA is sandwiched between 2 RuvA tetramers; dsDNA enters through RuvA and exits via RuvB. An RuvB hexamer assembles on each DNA strand where it exits the tetramer. Each RuvB hexamer is contacted by two RuvA subunits (via domain III) on 2 adjacent RuvB subunits; this complex drives branch migration. In the full resolvosome a probable DNA-RuvA(4)-RuvB(12)-RuvC(2) complex forms which resolves the HJ.

It localises to the cytoplasm. Functionally, the RuvA-RuvB-RuvC complex processes Holliday junction (HJ) DNA during genetic recombination and DNA repair, while the RuvA-RuvB complex plays an important role in the rescue of blocked DNA replication forks via replication fork reversal (RFR). RuvA specifically binds to HJ cruciform DNA, conferring on it an open structure. The RuvB hexamer acts as an ATP-dependent pump, pulling dsDNA into and through the RuvAB complex. HJ branch migration allows RuvC to scan DNA until it finds its consensus sequence, where it cleaves and resolves the cruciform DNA. The chain is Holliday junction branch migration complex subunit RuvA from Streptococcus suis (strain 98HAH33).